Reading from the N-terminus, the 344-residue chain is tRNA N6-adenosine threonylcarbamoyltransferase (344 aa).

The Fe cation site is built by H110 and H114. Residues 133 to 137 (VVSGA), D166, G179, and N278 each bind substrate. Residue D303 participates in Fe cation binding.

Belongs to the KAE1 / TsaD family. The cofactor is Fe(2+).

The protein resides in the cytoplasm. It catalyses the reaction L-threonylcarbamoyladenylate + adenosine(37) in tRNA = N(6)-L-threonylcarbamoyladenosine(37) in tRNA + AMP + H(+). Functionally, required for the formation of a threonylcarbamoyl group on adenosine at position 37 (t(6)A37) in tRNAs that read codons beginning with adenine. Is involved in the transfer of the threonylcarbamoyl moiety of threonylcarbamoyl-AMP (TC-AMP) to the N6 group of A37, together with TsaE and TsaB. TsaD likely plays a direct catalytic role in this reaction. This chain is tRNA N6-adenosine threonylcarbamoyltransferase, found in Chlamydia pneumoniae (Chlamydophila pneumoniae).